Consider the following 166-residue polypeptide: MTETTEALENPDNPEAETAAAEVTEAPVEAVPAESYVFERPIQTVGRRKEAVVRVRLVPGTGKFNLNGRTLEGYFPNKVHQQLVKAPLVTVDRVDGFDIYAHLHGGGPSGQAGALRLGIARALILASPDDRPALKKAGFLTRDPRATERKKYGLKKARKAPQYSKR.

The segment at 135 to 166 is disordered; it reads KKAGFLTRDPRATERKKYGLKKARKAPQYSKR. Residues 142–151 show a composition bias toward basic and acidic residues; the sequence is RDPRATERKK. Residues 152-166 are compositionally biased toward basic residues; that stretch reads YGLKKARKAPQYSKR.

Belongs to the universal ribosomal protein uS9 family.

This chain is Small ribosomal subunit protein uS9, found in Mycolicibacterium paratuberculosis (strain ATCC BAA-968 / K-10) (Mycobacterium paratuberculosis).